A 494-amino-acid chain; its full sequence is 3-octaprenyl-4-hydroxybenzoate carboxy-lyase (494 aa).

A Mn(2+)-binding site is contributed by N172. Residues 175 to 177 (IYR), 189 to 191 (RWL), and 194 to 195 (RG) contribute to the prenylated FMN site. Mn(2+) is bound at residue E238. D287 acts as the Proton donor in catalysis.

Belongs to the UbiD family. As to quaternary structure, homohexamer. The cofactor is prenylated FMN. Requires Mn(2+) as cofactor.

Its subcellular location is the cell membrane. It catalyses the reaction a 4-hydroxy-3-(all-trans-polyprenyl)benzoate + H(+) = a 2-(all-trans-polyprenyl)phenol + CO2. It functions in the pathway cofactor biosynthesis; ubiquinone biosynthesis. Catalyzes the decarboxylation of 3-octaprenyl-4-hydroxy benzoate to 2-octaprenylphenol, an intermediate step in ubiquinone biosynthesis. In Citrobacter koseri (strain ATCC BAA-895 / CDC 4225-83 / SGSC4696), this protein is 3-octaprenyl-4-hydroxybenzoate carboxy-lyase.